Consider the following 200-residue polypeptide: Large ribosomal subunit protein bL25 (200 aa).

Belongs to the bacterial ribosomal protein bL25 family. CTC subfamily. As to quaternary structure, part of the 50S ribosomal subunit; part of the 5S rRNA/L5/L18/L25 subcomplex. Contacts the 5S rRNA. Binds to the 5S rRNA independently of L5 and L18.

Its function is as follows. This is one of the proteins that binds to the 5S RNA in the ribosome where it forms part of the central protuberance. This Caldicellulosiruptor bescii (strain ATCC BAA-1888 / DSM 6725 / KCTC 15123 / Z-1320) (Anaerocellum thermophilum) protein is Large ribosomal subunit protein bL25.